Here is a 336-residue protein sequence, read N- to C-terminus: N-acetylornithine carbamoyltransferase (336 aa).

Residues 49–52 (SMRT), W77, and R112 each bind carbamoyl phosphate. Residue E144 participates in N(2)-acetyl-L-ornithine binding. 148–151 (HPCQ) is a binding site for carbamoyl phosphate. 2 residues coordinate N(2)-acetyl-L-ornithine: K252 and L295. 294-295 (CL) contributes to the carbamoyl phosphate binding site. K302 carries the post-translational modification N6-carboxylysine. R322 lines the carbamoyl phosphate pocket.

Belongs to the aspartate/ornithine carbamoyltransferase superfamily. AOTCase family. As to quaternary structure, homotrimer.

The protein resides in the cytoplasm. The enzyme catalyses N(2)-acetyl-L-ornithine + carbamoyl phosphate = N(2)-acetyl-L-citrulline + phosphate + H(+). The protein operates within amino-acid biosynthesis; L-arginine biosynthesis. Its activity is regulated as follows. Carboxylation at Lys-302 increases the catalytic activity of the enzyme. Catalyzes the transfer of the carbamoyl group from carbamoyl phosphate to the delta-amino group of N(2)-acetyl-L-ornithine to produce N(2)-acetyl-L-citrulline. This is a step in an alternative arginine biosynthesis pathway. The enzyme has no activity with ornithine. This chain is N-acetylornithine carbamoyltransferase, found in Xylella fastidiosa (strain 9a5c).